The sequence spans 60 residues: Large ribosomal subunit protein bL32 (60 aa).

The segment at Met1–Leu27 is disordered. The span at Lys13–Lys25 shows a compositional bias: basic residues.

The protein belongs to the bacterial ribosomal protein bL32 family.

This chain is Large ribosomal subunit protein bL32, found in Protochlamydia amoebophila (strain UWE25).